The sequence spans 375 residues: MFNQSFLKYMLFGFFLFSFHAHADRIRDLITIQGIRYNQLIGYGLVVGLDGTGDRTNQISYTTHALKNMLFQLGITFPNEQNAKFKNIAAVMVTTKFPNFTHIGQQVDVIVSSVGDATSLQGGTLLMTPLRGTDNKIYAVAQGNIIINDKNSVERFKNILVNNHLNNGMIINGATIEREMHTDFGKNETLNLQLNNEDFTVAQEISKKINMQYPKSAVALNSKIIQVCIPNNNIEQVEMLATIQNINIPIPIQDAKILINAKTGNIITNQTININTCAITHKNISMTIAFNKLKINRLVPNPIIKSDKNNNKTLNDEQIYKNNYNTNNFQYLEKTSNLNTIICALNLFDITTTELISILQSMHDAGCFHAKLEIT.

The N-terminal stretch at 1-23 (MFNQSFLKYMLFGFFLFSFHAHA) is a signal peptide.

Belongs to the FlgI family. As to quaternary structure, the basal body constitutes a major portion of the flagellar organelle and consists of four rings (L,P,S, and M) mounted on a central rod.

The protein localises to the bacterial flagellum basal body. Its function is as follows. Assembles around the rod to form the L-ring and probably protects the motor/basal body from shearing forces during rotation. The sequence is that of Flagellar P-ring protein from Buchnera aphidicola subsp. Baizongia pistaciae (strain Bp).